Reading from the N-terminus, the 119-residue chain is Fluoride-specific ion channel FluC 1 (119 aa).

The next 4 helical transmembrane spans lie at 2 to 22, 37 to 57, 62 to 82, and 99 to 119; these read TGAVAPPAVLVAAGGALGAVL, AGTLVVNVVGSFVLAALTFAA, TMLLFGTGACGAFTTFASFSV, and HALGNLLGAGLAVALAWLLVA. Residues glycine 72 and threonine 75 each coordinate Na(+).

It belongs to the fluoride channel Fluc/FEX (TC 1.A.43) family.

It is found in the cell membrane. It carries out the reaction fluoride(in) = fluoride(out). Its activity is regulated as follows. Na(+) is not transported, but it plays an essential structural role and its presence is essential for fluoride channel function. Functionally, fluoride-specific ion channel. Important for reducing fluoride concentration in the cell, thus reducing its toxicity. In Halobacterium salinarum (strain ATCC 700922 / JCM 11081 / NRC-1) (Halobacterium halobium), this protein is Fluoride-specific ion channel FluC 1.